The chain runs to 387 residues: N6-succino-2-amino-2'-deoxyadenylate synthase (387 aa).

Catalysis depends on Ser14, which acts as the Proton acceptor. Ser14, Thr15, Gly16, Lys17, and Gly18 together coordinate ATP. Ser14 contributes to the dGMP binding site. Residue Ser14 coordinates Mg(2+). Asn40 contributes to the dGMP binding site. ATP is bound by residues Gly42, His43, and Thr44. Gly42 is a Mg(2+) binding site. DGMP-binding residues include Ser125, Thr126, and Arg140. ATP is bound at residue Gln207. Thr222 contacts dGMP. Thr293 is a binding site for Mg(2+). Residues Thr293, Val294, and Arg299 each coordinate L-aspartate. ATP contacts are provided by Asn324 and Asn327.

The protein belongs to the Caudovirales PurZ family. Requires Mg(2+) as cofactor.

The enzyme catalyses dGMP + L-aspartate + ATP = (2S)-2-amino-2'-deoxyadenylo-succinate + ADP + phosphate + 2 H(+). Its pathway is purine metabolism. Its function is as follows. Involved in the synthesis of the atypical nucleotide dZTP (2-amino-2'-deoxyadenosine-5'-triphosphate). Catalyzes the condensation of aspartate with deoxyguanylate into dSMP (N6-succino-2-amino-2'-deoxyadenylate), which undergoes defumarylation and phosphorylation respectively by host PurB and guanylate/nucleoside diphosphate kinases to give dZTP. dZTP is integrated into the viral genome instead of adenine by the viral DNA polymerase. This Z-base probably completely replaces adenosine and forms a triple bond to the opposite T-base. The resulting non-standard viral DNA is called Z-genome. The chemically modified DNA is probably harder for the host bacteria to digest with nucleases or restriction enzymes. This is N6-succino-2-amino-2'-deoxyadenylate synthase from Acinetobacter phage SH-Ab 15497.